The following is a 224-amino-acid chain: Metalloproteinase inhibitor 4 (224 aa).

An N-terminal signal peptide occupies residues 1–29 (MPQSPRPVPSWALLLRLLALLRPPGLGEA). Cys30 contributes to the Zn(2+) binding site. 2 involved in metalloproteinase-binding regions span residues 30-33 (CSCA) and 99-100 (SS). 6 disulfide bridges follow: Cys30/Cys102, Cys32/Cys131, Cys42/Cys156, Cys158/Cys205, Cys163/Cys168, and Cys176/Cys197. The 127-residue stretch at 30-156 (CSCAPAHPQQ…SLNHHYHLNC (127 aa)) folds into the NTR domain.

It belongs to the protease inhibitor I35 (TIMP) family.

It localises to the secreted. Functionally, complexes with metalloproteinases (such as collagenases) and irreversibly inactivates them by binding to their catalytic zinc cofactor. The protein is Metalloproteinase inhibitor 4 (TIMP4) of Bos taurus (Bovine).